The chain runs to 121 residues: uncharacterized protein (121 aa).

Residues 8–37 (KQLMVCRDEIKKLKLKEKEAKNRILTYLKN) are a coiled coil.

This is an uncharacterized protein from Aedes vexans (Inland floodwater mosquito).